The sequence spans 74 residues: Small ribosomal subunit protein eS17 (74 aa).

This sequence belongs to the eukaryotic ribosomal protein eS17 family.

The protein is Small ribosomal subunit protein eS17 of Ignicoccus hospitalis (strain KIN4/I / DSM 18386 / JCM 14125).